Here is a 465-residue protein sequence, read N- to C-terminus: Cysteine--tRNA ligase (465 aa).

Position 29 (Cys29) interacts with Zn(2+). A 'HIGH' region motif is present at residues 31–41 (PTVYNYIHIGN). 3 residues coordinate Zn(2+): Cys209, His234, and Glu238. The 'KMSKS' region signature appears at 266–270 (KMSKS). Residue Lys269 participates in ATP binding. Ser270 is modified (phosphoserine).

Belongs to the class-I aminoacyl-tRNA synthetase family. As to quaternary structure, monomer. Zn(2+) is required as a cofactor.

Its subcellular location is the cytoplasm. It catalyses the reaction tRNA(Cys) + L-cysteine + ATP = L-cysteinyl-tRNA(Cys) + AMP + diphosphate. This is Cysteine--tRNA ligase from Bacillus cereus (strain G9842).